The chain runs to 232 residues: Ribose-5-phosphate isomerase A (232 aa).

Substrate contacts are provided by residues 28 to 31 (TGST), 83 to 86 (DGAD), and 96 to 99 (KGGG). Residue glutamate 105 is the Proton acceptor of the active site. Lysine 123 contributes to the substrate binding site.

It belongs to the ribose 5-phosphate isomerase family. In terms of assembly, homodimer.

The catalysed reaction is aldehydo-D-ribose 5-phosphate = D-ribulose 5-phosphate. It functions in the pathway carbohydrate degradation; pentose phosphate pathway; D-ribose 5-phosphate from D-ribulose 5-phosphate (non-oxidative stage): step 1/1. Its function is as follows. Catalyzes the reversible conversion of ribose-5-phosphate to ribulose 5-phosphate. The chain is Ribose-5-phosphate isomerase A from Nitrobacter hamburgensis (strain DSM 10229 / NCIMB 13809 / X14).